Consider the following 54-residue polypeptide: Preprotein translocase subunit SecG (54 aa).

Over 1–30 (MSKNKQDAGLSTSAGLVRYMDEDASKIKIA) the chain is Cytoplasmic. A helical membrane pass occupies residues 31–52 (PEKVLGITISIMVLLFILNYGL). The Extracellular segment spans residues 53 to 54 (LA).

The protein belongs to the SEC61-beta family. In terms of assembly, component of the protein translocase complex. Heterotrimer consisting of alpha (SecY), beta (SecG) and gamma (SecE) subunits. Can form oligomers of the heterotrimer.

It is found in the cell membrane. Its function is as follows. Involved in protein export. The function of the beta subunit is unknown, but it may be involved in stabilization of the trimeric complex. The chain is Preprotein translocase subunit SecG from Methanococcus aeolicus (strain ATCC BAA-1280 / DSM 17508 / OCM 812 / Nankai-3).